The sequence spans 212 residues: Protein FAM177A1 (212 aa).

Methionine 1 is modified (N-acetylmethionine). Residues 1-11 are compositionally biased toward basic and acidic residues; that stretch reads MEGEPASREEG. The segment at 1–33 is disordered; it reads MEGEPASREEGEAVNASGAAAASAFRESAQQMS. Positions 13 to 29 are enriched in low complexity; it reads AVNASGAAAASAFRESA. Position 69 is a phosphoserine (serine 69). Residue threonine 70 is modified to Phosphothreonine. The stretch at 135–172 forms a coiled coil; the sequence is IDEYYRMKKEEEEEEEENRMSEEAERQYQQNKLQADSV. The segment at 146 to 179 is disordered; it reads EEEEEENRMSEEAERQYQQNKLQADSVVQSDQPE. The span at 161–179 shows a compositional bias: polar residues; that stretch reads QYQQNKLQADSVVQSDQPE.

The protein belongs to the FAM177 family.

The sequence is that of Protein FAM177A1 (FAM177A1) from Bos taurus (Bovine).